The primary structure comprises 315 residues: Acetaldehyde dehydrogenase 2 (315 aa).

11-14 (SGNI) serves as a coordination point for NAD(+). Catalysis depends on C129, which acts as the Acyl-thioester intermediate. Residues 160–168 (SAGPGTRSN) and N290 each bind NAD(+).

It belongs to the acetaldehyde dehydrogenase family.

It catalyses the reaction acetaldehyde + NAD(+) + CoA = acetyl-CoA + NADH + H(+). The chain is Acetaldehyde dehydrogenase 2 from Mycobacterium sp. (strain KMS).